Consider the following 334-residue polypeptide: Serine/Arginine-related protein 53 (334 aa).

A compositionally biased stretch (basic and acidic residues) spans 1–13 (MGRRSSDTEEESR). Disordered stretches follow at residues 1-173 (MGRR…IKAG), 201-222 (LKAKERNEEEAKRRKEEDQATL), and 241-290 (VQQT…SIPT). Residues 14 to 24 (SKRKKKHRRRS) show a composition bias toward basic residues. The segment covering 44 to 62 (PRSESRSWSRDRQPRSHSY) has biased composition (basic and acidic residues). A compositionally biased stretch (basic residues) spans 78–118 (SRRKRSRSRSRGRGKSYRVQRSRSKSRTRRSRSRPRPRSHS). Basic and acidic residues-rich tracts occupy residues 132 to 166 (RSRDRDRRKVRDKEKREKEKDKGKDKEAHTIKRGD), 201 to 218 (LKAKERNEEEAKRRKEED), and 247 to 262 (SSKDVKKSVEPSEVKH). A coiled-coil region spans residues 180–234 (AEQAKARLQLVLEAAAKADEALKAKERNEEEAKRRKEEDQATLGEQVKRVKEIEA).

As to quaternary structure, interacts (via Arg/Ser-rich domain) with LUC7L3, RBM39 and RSF1. Phosphorylated.

The protein localises to the nucleus speckle. The protein resides in the nucleus. It localises to the cytoplasm. Functionally, plays a role in pre-mRNA splicing. Involved in both constitutive and alternative pre-mRNA splicing. May have a role in the recognition of the 3' splice site during the second step of splicing. This is Serine/Arginine-related protein 53 (Rsrc1) from Rattus norvegicus (Rat).